Here is a 78-residue protein sequence, read N- to C-terminus: Large ribosomal subunit protein bL28 (78 aa).

A disordered region spans residues 1-21; it reads MSKVCQVTGKRPITGHNVSHA.

This sequence belongs to the bacterial ribosomal protein bL28 family.

The chain is Large ribosomal subunit protein bL28 from Cellvibrio japonicus (strain Ueda107) (Pseudomonas fluorescens subsp. cellulosa).